Reading from the N-terminus, the 275-residue chain is NH(3)-dependent NAD(+) synthetase (275 aa).

46–53 (GISGGQDS) serves as a coordination point for ATP. Asp52 lines the Mg(2+) pocket. Arg140 is a deamido-NAD(+) binding site. Position 160 (Thr160) interacts with ATP. Glu165 provides a ligand contact to Mg(2+). Residues Lys173 and Asp180 each coordinate deamido-NAD(+). ATP contacts are provided by Lys189 and Thr211. 260–261 (HK) serves as a coordination point for deamido-NAD(+).

The protein belongs to the NAD synthetase family. Homodimer.

The enzyme catalyses deamido-NAD(+) + NH4(+) + ATP = AMP + diphosphate + NAD(+) + H(+). The protein operates within cofactor biosynthesis; NAD(+) biosynthesis; NAD(+) from deamido-NAD(+) (ammonia route): step 1/1. Its function is as follows. Catalyzes the ATP-dependent amidation of deamido-NAD to form NAD. Uses ammonia as a nitrogen source. In Escherichia coli O127:H6 (strain E2348/69 / EPEC), this protein is NH(3)-dependent NAD(+) synthetase.